A 417-amino-acid polypeptide reads, in one-letter code: Probable glucuronosyltransferase GUT1 (417 aa).

Residues 1 to 15 (MGTRRRSARARARPP) lie on the Cytoplasmic side of the membrane. Residues 16 to 36 (LAMPLAVLLLFACSSGVAAAA) traverse the membrane as a helical; Signal-anchor for type II membrane protein segment. The Lumenal portion of the chain corresponds to 37–417 (AQGIERIKDD…EGTREDLKPW (381 aa)). 2 N-linked (GlcNAc...) asparagine glycosylation sites follow: asparagine 144 and asparagine 405.

It belongs to the glycosyltransferase 47 family.

The protein resides in the golgi apparatus membrane. Functionally, involved in the synthesis of glucuronoxylan hemicellulose in secondary cell walls. The polypeptide is Probable glucuronosyltransferase GUT1 (GUT1) (Oryza sativa subsp. japonica (Rice)).